Consider the following 344-residue polypeptide: UDP-3-O-acylglucosamine N-acyltransferase (344 aa).

Histidine 248 acts as the Proton acceptor in catalysis.

Belongs to the transferase hexapeptide repeat family. LpxD subfamily. As to quaternary structure, homotrimer.

It carries out the reaction a UDP-3-O-[(3R)-3-hydroxyacyl]-alpha-D-glucosamine + a (3R)-hydroxyacyl-[ACP] = a UDP-2-N,3-O-bis[(3R)-3-hydroxyacyl]-alpha-D-glucosamine + holo-[ACP] + H(+). The protein operates within bacterial outer membrane biogenesis; LPS lipid A biosynthesis. Catalyzes the N-acylation of UDP-3-O-acylglucosamine using 3-hydroxyacyl-ACP as the acyl donor. Is involved in the biosynthesis of lipid A, a phosphorylated glycolipid that anchors the lipopolysaccharide to the outer membrane of the cell. In Prochlorococcus marinus (strain MIT 9312), this protein is UDP-3-O-acylglucosamine N-acyltransferase.